We begin with the raw amino-acid sequence, 303 residues long: Coenzyme PQQ synthesis protein B (303 aa).

It belongs to the PqqB family.

The protein operates within cofactor biosynthesis; pyrroloquinoline quinone biosynthesis. May be involved in the transport of PQQ or its precursor to the periplasm. The protein is Coenzyme PQQ synthesis protein B of Acinetobacter baumannii (strain AYE).